The chain runs to 418 residues: Cyclin-A1 (418 aa).

The protein belongs to the cyclin family. Cyclin AB subfamily. In terms of assembly, interacts with the CDK1 and the CDK2 protein kinases to form a serine/threonine kinase holoenzyme complex. The cyclin subunit imparts substrate specificity to the complex.

It is found in the nucleus. May be involved in the control of the cell cycle at the G1/S (start) and G2/M (mitosis) transitions. This is Cyclin-A1 (ccna1) from Xenopus laevis (African clawed frog).